Reading from the N-terminus, the 476-residue chain is Deoxyguanosinetriphosphate triphosphohydrolase-like protein 2 (476 aa).

A disordered region spans residues 1-20; the sequence is MYTDADRSREVVPEKDGHDK. An HD domain is found at 60–233; that stretch reads RLTHSLEVAQ…MDLADDIAYS (174 aa).

The protein belongs to the dGTPase family. Type 2 subfamily.

This is Deoxyguanosinetriphosphate triphosphohydrolase-like protein 2 from Mesorhizobium japonicum (strain LMG 29417 / CECT 9101 / MAFF 303099) (Mesorhizobium loti (strain MAFF 303099)).